A 592-amino-acid chain; its full sequence is A-type ATP synthase subunit A (592 aa).

233-240 (GPFGSGKT) contacts ATP.

Belongs to the ATPase alpha/beta chains family. In terms of assembly, has multiple subunits with at least A(3), B(3), C, D, E, F, H, I and proteolipid K(x).

The protein localises to the cell membrane. It carries out the reaction ATP + H2O + 4 H(+)(in) = ADP + phosphate + 5 H(+)(out). Its function is as follows. Component of the A-type ATP synthase that produces ATP from ADP in the presence of a proton gradient across the membrane. The A chain is the catalytic subunit. The chain is A-type ATP synthase subunit A from Saccharolobus islandicus (strain Y.G.57.14 / Yellowstone #1) (Sulfolobus islandicus).